The following is a 144-amino-acid chain: Nucleoside diphosphate kinase (144 aa).

Residues lysine 11, phenylalanine 59, arginine 87, threonine 93, arginine 104, and asparagine 114 each contribute to the ATP site. Histidine 117 serves as the catalytic Pros-phosphohistidine intermediate.

Belongs to the NDK family. In terms of assembly, homotetramer. It depends on Mg(2+) as a cofactor.

The protein resides in the cytoplasm. The enzyme catalyses a 2'-deoxyribonucleoside 5'-diphosphate + ATP = a 2'-deoxyribonucleoside 5'-triphosphate + ADP. It carries out the reaction a ribonucleoside 5'-diphosphate + ATP = a ribonucleoside 5'-triphosphate + ADP. Major role in the synthesis of nucleoside triphosphates other than ATP. The ATP gamma phosphate is transferred to the NDP beta phosphate via a ping-pong mechanism, using a phosphorylated active-site intermediate. The sequence is that of Nucleoside diphosphate kinase from Baumannia cicadellinicola subsp. Homalodisca coagulata.